Here is a 333-residue protein sequence, read N- to C-terminus: Ketol-acid reductoisomerase (NADP(+)) (333 aa).

The KARI N-terminal Rossmann domain maps to 1 to 171 (MSNHTQPKIA…GGARANIIKT (171 aa)). Residues 14–17 (YGSQ), R37, T42, and 72–75 (DMVQ) contribute to the NADP(+) site. The active site involves H97. G123 serves as a coordination point for NADP(+). One can recognise a KARI C-terminal knotted domain in the interval 172–317 (TFKEETETDL…KKLRAKMVWL (146 aa)). Mg(2+) is bound by residues D180, E184, E216, and E220. Position 241 (S241) interacts with substrate.

This sequence belongs to the ketol-acid reductoisomerase family. It depends on Mg(2+) as a cofactor.

It catalyses the reaction (2R)-2,3-dihydroxy-3-methylbutanoate + NADP(+) = (2S)-2-acetolactate + NADPH + H(+). The enzyme catalyses (2R,3R)-2,3-dihydroxy-3-methylpentanoate + NADP(+) = (S)-2-ethyl-2-hydroxy-3-oxobutanoate + NADPH + H(+). Its pathway is amino-acid biosynthesis; L-isoleucine biosynthesis; L-isoleucine from 2-oxobutanoate: step 2/4. The protein operates within amino-acid biosynthesis; L-valine biosynthesis; L-valine from pyruvate: step 2/4. In terms of biological role, involved in the biosynthesis of branched-chain amino acids (BCAA). Catalyzes an alkyl-migration followed by a ketol-acid reduction of (S)-2-acetolactate (S2AL) to yield (R)-2,3-dihydroxy-isovalerate. In the isomerase reaction, S2AL is rearranged via a Mg-dependent methyl migration to produce 3-hydroxy-3-methyl-2-ketobutyrate (HMKB). In the reductase reaction, this 2-ketoacid undergoes a metal-dependent reduction by NADPH to yield (R)-2,3-dihydroxy-isovalerate. This chain is Ketol-acid reductoisomerase (NADP(+)), found in Xanthomonas axonopodis pv. citri (strain 306).